We begin with the raw amino-acid sequence, 589 residues long: O-fucosyltransferase 11 (589 aa).

Positions 1-37 (MKSKIHHQPNGSNNGVVSSNDNGCRSESPSPPLSPNR) are disordered. Residues 10–23 (NGSNNGVVSSNDNG) are compositionally biased toward low complexity. The chain crosses the membrane as a helical; Signal-anchor for type II membrane protein span at residues 68–88 (MIYASGLLMCVGPFSGLVGWV). N-linked (GlcNAc...) asparagine glycosylation is found at Asn-112, Asn-136, and Asn-239. 332–334 (HLR) provides a ligand contact to substrate. Residues Asn-405, Asn-406, and Asn-564 are each glycosylated (N-linked (GlcNAc...) asparagine).

This sequence belongs to the glycosyltransferase GT106 family.

It is found in the membrane. It functions in the pathway glycan metabolism. The polypeptide is O-fucosyltransferase 11 (Arabidopsis thaliana (Mouse-ear cress)).